Consider the following 344-residue polypeptide: tRNA N6-adenosine threonylcarbamoyltransferase (344 aa).

Positions 112 and 116 each coordinate Fe cation. Residues 134–138 (LASGG), aspartate 167, glycine 180, and asparagine 280 contribute to the substrate site. A Fe cation-binding site is contributed by aspartate 308.

The protein belongs to the KAE1 / TsaD family. The cofactor is Fe(2+).

It localises to the cytoplasm. It carries out the reaction L-threonylcarbamoyladenylate + adenosine(37) in tRNA = N(6)-L-threonylcarbamoyladenosine(37) in tRNA + AMP + H(+). In terms of biological role, required for the formation of a threonylcarbamoyl group on adenosine at position 37 (t(6)A37) in tRNAs that read codons beginning with adenine. Is involved in the transfer of the threonylcarbamoyl moiety of threonylcarbamoyl-AMP (TC-AMP) to the N6 group of A37, together with TsaE and TsaB. TsaD likely plays a direct catalytic role in this reaction. In Rickettsia rickettsii (strain Iowa), this protein is tRNA N6-adenosine threonylcarbamoyltransferase.